The following is a 114-amino-acid chain: Large ribosomal subunit protein bL20c (114 aa).

This sequence belongs to the bacterial ribosomal protein bL20 family.

It is found in the plastid. It localises to the chloroplast. Functionally, binds directly to 23S ribosomal RNA and is necessary for the in vitro assembly process of the 50S ribosomal subunit. It is not involved in the protein synthesizing functions of that subunit. The sequence is that of Large ribosomal subunit protein bL20c from Psilotum nudum (Whisk fern).